The chain runs to 151 residues: Sperm surface protein Sp17 (151 aa).

Disordered stretches follow at residues 56–115 (DPAE…EKEE) and 127–151 (GHIA…EENK). Positions 62–98 (SKVEDRFYNNHAFEEQEPPEKSDPKQEESQISGKEEE) are enriched in basic and acidic residues. Residues 114–143 (EEVAAVKIQAAFRGHIAREEAKKMKTNSLQ) enclose the IQ domain.

As to quaternary structure, homodimer. May interact with ROPN1. In terms of tissue distribution, testis and sperm specific.

It is found in the membrane. Sperm surface zona pellucida binding protein. Helps to bind spermatozoa to the zona pellucida with high affinity. Might function in binding zona pellucida and carbohydrates. The polypeptide is Sperm surface protein Sp17 (SPA17) (Homo sapiens (Human)).